A 232-amino-acid polypeptide reads, in one-letter code: Cell surface superoxide dismutase [Cu-Zn] 4 (232 aa).

The signal sequence occupies residues 1–15 (MKYLSIISIVALALA). An N-linked (GlcNAc...) asparagine glycan is attached at asparagine 53. Histidine 75 and histidine 77 together coordinate Cu cation. Asparagine 86 carries an N-linked (GlcNAc...) asparagine glycan. Histidine 93 contributes to the Cu cation binding site. Histidine 93 serves as a coordination point for Zn(2+). Residue asparagine 98 is glycosylated (N-linked (GlcNAc...) asparagine). Aspartate 113 serves as a coordination point for Zn(2+). Residue asparagine 120 is glycosylated (N-linked (GlcNAc...) asparagine). Histidine 153 provides a ligand contact to Cu cation. N-linked (GlcNAc...) asparagine glycosylation is found at asparagine 156, asparagine 164, asparagine 182, asparagine 193, and asparagine 196. Residues 174-208 (TASAATWSNSSSSSSSSSKNSTNGSSGSSTSASQG) are compositionally biased toward low complexity. The tract at residues 174 to 211 (TASAATWSNSSSSSSSSSKNSTNGSSGSSTSASQGSGA) is disordered. A lipid anchor (GPI-anchor amidated serine) is attached at serine 209. The propeptide at 210–232 (GAGRAEISGFLAAGIAGVVAALI) is removed in mature form. Arginine 213 provides a ligand contact to substrate.

Belongs to the Cu-Zn superoxide dismutase family. Cu cation serves as cofactor. It depends on Zn(2+) as a cofactor. In terms of processing, the GPI-anchor is attached to the protein in the endoplasmic reticulum and serves to target the protein to the cell surface. There, the glucosamine-inositol phospholipid moiety is cleaved off and the GPI-modified mannoprotein is covalently attached via its lipidless GPI glycan remnant to the 1,6-beta-glucan of the outer cell wall layer.

It localises to the secreted. The protein resides in the cell wall. The protein localises to the membrane. It carries out the reaction 2 superoxide + 2 H(+) = H2O2 + O2. In terms of biological role, superoxide dismutases serve to convert damaging superoxide radicals, a key form of ROS, to less damaging hydrogen peroxide that can be converted into water by catalase action. Degrades host-derived reactive oxygen species to escape innate immune surveillance. Involved in the occurrence of miconazole-tolerant persisters in biofilms. Persisters are cells that survive high doses of an antimicrobial agent. The polypeptide is Cell surface superoxide dismutase [Cu-Zn] 4 (SOD4) (Candida albicans (strain SC5314 / ATCC MYA-2876) (Yeast)).